Reading from the N-terminus, the 20-residue chain is Basic phospholipase A2 cannitoxin alpha chain (20 aa).

Heterotrimer of alpha, beta, and gamma chains; non-covalently linked. The cofactor is Ca(2+). In terms of tissue distribution, expressed by the venom gland.

The protein resides in the secreted. The enzyme catalyses a 1,2-diacyl-sn-glycero-3-phosphocholine + H2O = a 1-acyl-sn-glycero-3-phosphocholine + a fatty acid + H(+). Its function is as follows. Heterotrimer: Snake venom phospholipase A2 (PLA2) heterotrimer that acts as a potent presynaptic neurotoxin by blocking synaptic transmission and synaptic vesicle recycling. Enzymatic activity is essential for the neurotoxic effects. May act by binding in a calcium-dependent fashion to neurotonal pentraxin-1 (NPTX1) and neurotonal pentraxin-2 (NPTX2), but not to neuronal pentraxin receptor (NPTXR). Also binds to taipoxin-associated calcium binding protein 49 (RCN2), a protein localized in the lumen of endoplasmic reticulum. Monomer (alpha chain): Snake venom phospholipase A2 (PLA2) that possesses a low level of presynaptic activity and the same high enzymatic activity than the heterotrimer. PLA2 catalyzes the calcium-dependent hydrolysis of the 2-acyl groups in 3-sn-phosphoglycerides. The polypeptide is Basic phospholipase A2 cannitoxin alpha chain (Oxyuranus scutellatus canni (Papuan taipan)).